The sequence spans 264 residues: Indole-3-glycerol phosphate synthase (264 aa).

Belongs to the TrpC family.

It catalyses the reaction 1-(2-carboxyphenylamino)-1-deoxy-D-ribulose 5-phosphate + H(+) = (1S,2R)-1-C-(indol-3-yl)glycerol 3-phosphate + CO2 + H2O. The protein operates within amino-acid biosynthesis; L-tryptophan biosynthesis; L-tryptophan from chorismate: step 4/5. This chain is Indole-3-glycerol phosphate synthase, found in Stenotrophomonas maltophilia (strain K279a).